The chain runs to 689 residues: DNA-directed RNA polymerase subunit beta' (689 aa).

Cys69, Cys71, Cys87, and Cys90 together coordinate Zn(2+). Residues Asp489, Asp491, and Asp493 each contribute to the Mg(2+) site.

Belongs to the RNA polymerase beta' chain family. RpoC1 subfamily. In terms of assembly, in plastids the minimal PEP RNA polymerase catalytic core is composed of four subunits: alpha, beta, beta', and beta''. When a (nuclear-encoded) sigma factor is associated with the core the holoenzyme is formed, which can initiate transcription. The cofactor is Mg(2+). Requires Zn(2+) as cofactor.

The protein resides in the plastid. It localises to the chloroplast. The catalysed reaction is RNA(n) + a ribonucleoside 5'-triphosphate = RNA(n+1) + diphosphate. Functionally, DNA-dependent RNA polymerase catalyzes the transcription of DNA into RNA using the four ribonucleoside triphosphates as substrates. This is DNA-directed RNA polymerase subunit beta' from Lactuca sativa (Garden lettuce).